Here is a 730-residue protein sequence, read N- to C-terminus: Dual function macrocyclase-peptidase POPB (730 aa).

Residues Met-1 to Pro-34 form a disordered region. Residues Ser-577, Asp-661, and His-698 each act as charge relay system in the active site.

The protein belongs to the peptidase S9A family. In terms of assembly, monomer.

It catalyses the reaction Hydrolysis of Pro-|-Xaa &gt;&gt; Ala-|-Xaa in oligopeptides.. Dual function macrocyclase-peptidase involved in the biosynthesis of the highly toxic amanitin toxin family of macrocycles. Cleaves peptide bonds on the C-terminal side of prolyl residues. The enzyme first removes 10 residues from the N-terminus of a 35-residue substrate. Conformational trapping of the 25 amino-acid peptide forces the enzyme to release this intermediate rather than proceed to macrocyclization. The enzyme rebinds the 25 amino-acid peptide in a different conformation and catalyzes macrocyclization of the N-terminal eight residues. In Galerina marginata (strain CBS 339.88), this protein is Dual function macrocyclase-peptidase POPB.